Reading from the N-terminus, the 313-residue chain is Olfactory receptor 4M1 (313 aa).

Over 1–25 the chain is Extracellular; it reads METANYTKVTEFVLTGLSQTREVQL. N-linked (GlcNAc...) asparagine glycosylation occurs at Asn-5. Residues 26–49 traverse the membrane as a helical segment; it reads VLFVIFLSFYLFILPGNILIICTI. Over 50–57 the chain is Cytoplasmic; it reads RLDPHLTS. Residues 58–79 form a helical membrane-spanning segment; sequence PMYFLLANLALLDIWYSSITAP. Residues 80 to 100 lie on the Extracellular side of the membrane; the sequence is KMLIDFFVERKIISFGGCIAQ. Cys-97 and Cys-189 are oxidised to a cystine. A helical transmembrane segment spans residues 101 to 120; that stretch reads LFFLHFVGASEMFLLTVMAY. Over 121–139 the chain is Cytoplasmic; it reads DRYAAICRPLHYATIMNRR. The chain crosses the membrane as a helical span at residues 140 to 158; it reads LCCILVALSWMGGFIHSII. Residues 159-195 lie on the Extracellular side of the membrane; that stretch reads QVALIVRLPFCGPNELDSYFCDITQVVRIACANTFPE. A helical transmembrane segment spans residues 196-219; it reads ELVMICSSGLISVVCFIALLMSYA. Residues 220 to 237 lie on the Cytoplasmic side of the membrane; that stretch reads FLLALLKKHSGSGENTNR. A helical transmembrane segment spans residues 238–260; sequence AMSTCYSHITIVVLMFGPSIYIY. Topologically, residues 261–271 are extracellular; sequence ARPFDSFSLDK. The chain crosses the membrane as a helical span at residues 272-291; it reads VVSVFHTVIFPLLNPIIYTL. Over 292–313 the chain is Cytoplasmic; it reads RNKEVKAAMRKVVTKYILCEEK.

It belongs to the G-protein coupled receptor 1 family. As to expression, highly expressed in the testis and olfactory bulb.

It is found in the cell membrane. In terms of biological role, olfactory receptor that acts as a receptor of Asprosin hormone, potentially at the surface of hepatocytes and may help to promote hepatocyte glucose release. The chain is Olfactory receptor 4M1 from Homo sapiens (Human).